A 128-amino-acid chain; its full sequence is Disintegrin ocellatusin (128 aa).

Residues 1–20 (MIPVLLVTICLAVFPFQGSS) form the signal peptide. Positions 21-65 (IILESGNINDYEIVYPKKVAVLPTGAMNSAHPCYDPVTCQPKEKE) are excised as a propeptide. The 87-residue stretch at 26 to 112 (GNINDYEIVY…DCPRNPYKGE (87 aa)) folds into the Disintegrin domain. Cystine bridges form between C53–C59, C67–C76, C72–C97, C73–C102, and C85–C104. Residues 89 to 91 (RGD) carry the Cell attachment site motif. The propeptide occupies 116–128 (MEWPAPAKGSVLM).

As to quaternary structure, monomer. As to expression, expressed by the venom gland.

Its subcellular location is the secreted. The disintegrin ocellatusin-10c1 is a poor inhibitor of platelet aggregation. The disintegrin inhibits the adhesion of cells expressing the RGD-dependent integrin alpha-5/beta-1 (ITGA5/ITGB1) to immobilized fibronectin. Inhibition on alpha-2b/beta-3 (ITGA2B/ITGB3) is low, and there is no inhibition on alpha-1/beta-1 (ITGA1/ITGB1), alpha-2/beta-1 (ITGA2/ITGB1) and alpha-6/beta-1 (ITGA6/ITGB1). In terms of biological role, the short monomeric disintegrin ocellatusin inhibits ADP-induced platelet aggregation (IC(50)=168 nM). Inhibits alpha-5/beta-1 (ITGA5/ITGB1) integrin and induces the expression of a ligand-induced binding site epitope on beta-1 integrin subunit. Has a direct chemotactic stimulus on human neutrophils in vitro. This Echis ocellatus (Ocellated saw-scaled viper) protein is Disintegrin ocellatusin.